Here is an 858-residue protein sequence, read N- to C-terminus: MGEINQVAVEKYLEENPQFAKEYFDRKLRVEVLGEIFKNSQVPVQSSMSFSELTQVEESALCLELLWTVQEEGGTPEQGVHRALQRLAHLLQADRCSMFLCRSRNGIPEVASRLLDVTPTSKFEDNLVGPDKEVVFPLDIGIVGWAAHTKKTHNVPDVKKNSHFSDFMDKQTGYVTKNLLATPIVVGKEVLAVIMAVNKVNASEFSKQDEEVFSKYLNFVSIILRLHHTSYMYNIESRRSQILMWSANKVFEELTDVERQFHKALYTVRSYLNCERYSIGLLDMTKEKEFYDEWPIKLGEVEPYKGPKTPDGREVNFYKIIDYILHGKEEIKVIPTPPADHWTLISGLPTYVAENGFICNMMNAPADEYFTFQKGPVDETGWVIKNVLSLPIVNKKEDIVGVATFYNRKDGKPFDEHDEYITETLTQFLGWSLLNTDTYDKMNKLENRKDIAQEMLMNQTKATPEEIKSILKFQEKLNVDVIDDCEEKQLVAILKEDLPDPRSAELYEFRFSDFPLTEHGLIKCGIRLFFEINVVEKFKVPVEVLTRWMYTVRKGYRAVTYHNWRHGFNVGQTMFTLLMTGRLKKYYTDLEAFAMLAAAFCHDIDHRGTNNLYQMKSTSPLARLHGSSILERHHLEYSKTLLQDESLNIFQNLNKRQFETVIHLFEVAIIATDLALYFKKRTMFQKIVDACEQMQTEEEAIKYVTVDPTKKEIIMAMMMTACDLSAITKPWEVQSQVALMVANEFWEQGDLERTVLQQQPIPMMDRNKRDELPKLQVGFIDFVCTFVYKEFSRFHKEITPMLSGLQNNRVEWKSLADEYDAKMKVIEEEAKKQEGGAEKAAEDSGGGDDKKSKTCLML.

GAF domains follow at residues 75–224 (TPEQ…SIIL) and 256–433 (DVER…GWSL). 3',5'-cyclic GMP contacts are provided by residues Ser97, Asp116, 169–172 (DKQT), and Thr176. In terms of domain architecture, PDEase spans 486–819 (EEKQLVAILK…VEWKSLADEY (334 aa)). Catalysis depends on His562, which acts as the Proton donor. Residues His566, His602, Asp603, and Asp723 each coordinate a divalent metal cation. Positions 830–852 (AKKQEGGAEKAAEDSGGGDDKKS) are enriched in basic and acidic residues. Positions 830 to 858 (AKKQEGGAEKAAEDSGGGDDKKSKTCLML) are disordered. Cys855 is modified (cysteine methyl ester). Residue Cys855 is the site of S-geranylgeranyl cysteine attachment. Residues 856–858 (LML) constitute a propeptide, removed in mature form.

This sequence belongs to the cyclic nucleotide phosphodiesterase family. In terms of assembly, composed of two alpha' subunits that are associated with 3 smaller proteins of 11, 13, and 15 kDa. The cofactor is a divalent metal cation.

The protein localises to the cell membrane. The catalysed reaction is 3',5'-cyclic GMP + H2O = GMP + H(+). In terms of biological role, as cone-specific cGMP phosphodiesterase, it plays an essential role in light detection and cone phototransduction by rapidly decreasing intracellular levels of cGMP. The sequence is that of Cone cGMP-specific 3',5'-cyclic phosphodiesterase subunit alpha' (PDE6C) from Homo sapiens (Human).